We begin with the raw amino-acid sequence, 518 residues long: Calcium-dependent protein kinase 1 (518 aa).

The span at 1-10 (MGNRTSRHHR) shows a compositional bias: basic residues. The tract at residues 1-49 (MGNRTSRHHRAAPEQPPPQPKPKPQPQQQQQQWPRPQQPTPPPAAAPDA) is disordered. Residue Gly-2 is the site of N-myristoyl glycine attachment. A compositionally biased stretch (pro residues) spans 14–25 (EQPPPQPKPKPQ). The segment covering 26 to 35 (PQQQQQQWPR) has biased composition (low complexity). A compositionally biased stretch (pro residues) spans 36 to 45 (PQQPTPPPAA). One can recognise a Protein kinase domain in the interval 66–324 (YTFGRELGRG…SAEILNHPWI (259 aa)). Residues 72-80 (LGRGQFGVT) and Lys-95 each bind ATP. Catalysis depends on Asp-190, which acts as the Proton acceptor. The segment at 330–360 (APDKPLDITVISRMKQFRAMNKLKKVALKVV) is autoinhibitory domain. 4 EF-hand domains span residues 367–402 (EEITGLKEMFRSLDTDNSGTITLEELRSGLPKLGTK), 403–438 (ISESEIRQLMEAADVDGNGTIDYAEFISATMHMNRL), 439–474 (EKEDHILKAFEYFDKDHSGYITVDELEEALKKYDMG), and 475–509 (DDKTIKEIIAEVDTDHDGRINYQEFVAMMRNNNPE). Ca(2+) contacts are provided by Asp-380, Asp-382, Ser-384, Thr-386, Glu-391, Asp-416, Asp-418, Asn-420, Thr-422, Glu-427, Asp-452, Asp-454, Ser-456, Tyr-458, Glu-463, Asp-487, Asp-489, Asp-491, Arg-493, and Glu-498.

This sequence belongs to the protein kinase superfamily. Ser/Thr protein kinase family. CDPK subfamily. In terms of tissue distribution, expressed in roots and leaf blades.

Its subcellular location is the membrane. It carries out the reaction L-seryl-[protein] + ATP = O-phospho-L-seryl-[protein] + ADP + H(+). The catalysed reaction is L-threonyl-[protein] + ATP = O-phospho-L-threonyl-[protein] + ADP + H(+). With respect to regulation, activated by calcium. Autophosphorylation may play an important role in the regulation of the kinase activity. May play a role in signal transduction pathways that involve calcium as a second messenger. This chain is Calcium-dependent protein kinase 1, found in Oryza sativa subsp. japonica (Rice).